The sequence spans 673 residues: F-box/LRR-repeat protein 17 (673 aa).

The interval Met-1–Ala-39 is disordered. The span at Ser-9–Ala-39 shows a compositional bias: basic and acidic residues. The F-box domain occupies Pro-291–Leu-338.

The protein belongs to the FBXL17 family. In terms of assembly, part of the SCF (SKP1-CUL1-F-box) E3 ubiquitin-protein ligase complex SCF(FBXL17). Interacts with BTB domain-containing proteins; specifically recognizes and binds a conserved degron of non-consecutive residues present at the interface of BTB dimers of aberrant composition. As to expression, expressed in the neuro-ectoderm of embryos.

It is found in the cytoplasm. Its subcellular location is the nucleus. In terms of biological role, substrate-recognition component of the SCF(FBXL17) E3 ubiquitin ligase complex, a key component of a quality control pathway required to ensure functional dimerization of BTB domain-containing proteins (dimerization quality control, DQC). FBXL17 specifically recognizes and binds a conserved degron of non-consecutive residues present at the interface of BTB dimers of aberrant composition: aberrant BTB dimer are then ubiquitinated by the SCF(FBXL17) complex and degraded by the proteasome. The ability of the SCF(FBXL17) complex to eliminate compromised BTB dimers is required for the differentiation and survival of neural crest and neuronal cells. This chain is F-box/LRR-repeat protein 17, found in Xenopus laevis (African clawed frog).